The chain runs to 446 residues: UDP-N-acetylmuramoylalanine--D-glutamate ligase (446 aa).

ATP is bound at residue 116–122; it reads GSNGKTT.

The protein belongs to the MurCDEF family.

Its subcellular location is the cytoplasm. The enzyme catalyses UDP-N-acetyl-alpha-D-muramoyl-L-alanine + D-glutamate + ATP = UDP-N-acetyl-alpha-D-muramoyl-L-alanyl-D-glutamate + ADP + phosphate + H(+). It participates in cell wall biogenesis; peptidoglycan biosynthesis. Its function is as follows. Cell wall formation. Catalyzes the addition of glutamate to the nucleotide precursor UDP-N-acetylmuramoyl-L-alanine (UMA). This chain is UDP-N-acetylmuramoylalanine--D-glutamate ligase, found in Marinobacter nauticus (strain ATCC 700491 / DSM 11845 / VT8) (Marinobacter aquaeolei).